A 430-amino-acid chain; its full sequence is Glutamyl-tRNA reductase (430 aa).

Substrate-binding positions include 50-53 (TCNR), S108, 113-115 (EPQ), and Q119. C51 serves as the catalytic Nucleophile. 188–193 (GAGEMA) contributes to the NADP(+) binding site.

The protein belongs to the glutamyl-tRNA reductase family. In terms of assembly, homodimer.

It carries out the reaction (S)-4-amino-5-oxopentanoate + tRNA(Glu) + NADP(+) = L-glutamyl-tRNA(Glu) + NADPH + H(+). Its pathway is porphyrin-containing compound metabolism; protoporphyrin-IX biosynthesis; 5-aminolevulinate from L-glutamyl-tRNA(Glu): step 1/2. In terms of biological role, catalyzes the NADPH-dependent reduction of glutamyl-tRNA(Glu) to glutamate 1-semialdehyde (GSA). The sequence is that of Glutamyl-tRNA reductase from Lawsonia intracellularis (strain PHE/MN1-00).